Reading from the N-terminus, the 485-residue chain is Glutamate--tRNA ligase (485 aa).

Residues 11–21 carry the 'HIGH' region motif; sequence PSPTGLLHIGN. Residues 255–259 carry the 'KMSKS' region motif; that stretch reads KLSKR. Residue K258 participates in ATP binding.

This sequence belongs to the class-I aminoacyl-tRNA synthetase family. Glutamate--tRNA ligase type 1 subfamily. In terms of assembly, monomer.

It is found in the cytoplasm. It carries out the reaction tRNA(Glu) + L-glutamate + ATP = L-glutamyl-tRNA(Glu) + AMP + diphosphate. Functionally, catalyzes the attachment of glutamate to tRNA(Glu) in a two-step reaction: glutamate is first activated by ATP to form Glu-AMP and then transferred to the acceptor end of tRNA(Glu). This is Glutamate--tRNA ligase from Streptococcus mutans serotype c (strain ATCC 700610 / UA159).